A 425-amino-acid chain; its full sequence is Protein cab-1 (425 aa).

Over residues 1-11 the composition is skewed to basic and acidic residues; it reads MRYTFSDEKKA. Disordered stretches follow at residues 1–20 and 214–251; these read MRYT…SRAK and LKKT…VPQK. The tract at residues 205-424 is AEX-3-binding; the sequence is ENEIAKESEL…EVCNPNFAAQ (220 aa). The chain crosses the membrane as a helical span at residues 300–320; that stretch reads LLLLAVGTVMCVGLIGTVAGG. Residues 334–355 are disordered; that stretch reads DDGEYAPYAGTGPGFRKNKGNK.

This sequence belongs to the NPDC1/cab-1 family. Binds to the RAB3 GDP/GTP exchange factor aex-3. In terms of tissue distribution, expressed in a variety of neurons.

Its subcellular location is the membrane. This chain is Protein cab-1 (cab-1), found in Caenorhabditis elegans.